A 475-amino-acid polypeptide reads, in one-letter code: Ribulose bisphosphate carboxylase large chain (475 aa).

N6,N6,N6-trimethyllysine is present on K14. Substrate contacts are provided by N123 and T173. K175 acts as the Proton acceptor in catalysis. Position 177 (K177) interacts with substrate. Positions 201, 203, and 204 each coordinate Mg(2+). Position 201 is an N6-carboxylysine (K201). H294 acts as the Proton acceptor in catalysis. Substrate is bound by residues R295, H327, and S379.

It belongs to the RuBisCO large chain family. Type I subfamily. As to quaternary structure, heterohexadecamer of 8 large chains and 8 small chains; disulfide-linked. The disulfide link is formed within the large subunit homodimers. Mg(2+) is required as a cofactor. The disulfide bond which can form in the large chain dimeric partners within the hexadecamer appears to be associated with oxidative stress and protein turnover.

The protein localises to the plastid. The enzyme catalyses 2 (2R)-3-phosphoglycerate + 2 H(+) = D-ribulose 1,5-bisphosphate + CO2 + H2O. The catalysed reaction is D-ribulose 1,5-bisphosphate + O2 = 2-phosphoglycolate + (2R)-3-phosphoglycerate + 2 H(+). RuBisCO catalyzes two reactions: the carboxylation of D-ribulose 1,5-bisphosphate, the primary event in carbon dioxide fixation, as well as the oxidative fragmentation of the pentose substrate in the photorespiration process. Both reactions occur simultaneously and in competition at the same active site. This chain is Ribulose bisphosphate carboxylase large chain (rbcL), found in Euglena longa (Euglenophycean alga).